We begin with the raw amino-acid sequence, 368 residues long: L-arabinitol 4-dehydrogenase (368 aa).

The Zn(2+) site is built by C52, H77, E78, C107, C110, C113, C121, and E162. 3 residues coordinate NAD(+): D210, R215, and I282.

Belongs to the zinc-containing alcohol dehydrogenase family. In terms of assembly, homotetramer. Requires Zn(2+) as cofactor.

It carries out the reaction L-arabinitol + NAD(+) = L-xylulose + NADH + H(+). In terms of biological role, plays a key role in liamocins biosynthesis by providing the arabinol moity that is linked to 3,5-dihydroxydecanoic acid (provided by the HR-PKS PKS1) via ester bond formation catalyzed by the esterase EST1. This chain is L-arabinitol 4-dehydrogenase, found in Aureobasidium melanogenum (Aureobasidium pullulans var. melanogenum).